A 620-amino-acid polypeptide reads, in one-letter code: 1-deoxy-D-xylulose-5-phosphate synthase (620 aa).

Thiamine diphosphate is bound by residues His-80 and 121–123 (GHS). Asp-152 provides a ligand contact to Mg(2+). Thiamine diphosphate contacts are provided by residues 153–154 (GA), Asn-181, Tyr-288, and Glu-370. Asn-181 is a binding site for Mg(2+).

This sequence belongs to the transketolase family. DXPS subfamily. In terms of assembly, homodimer. It depends on Mg(2+) as a cofactor. The cofactor is thiamine diphosphate.

It catalyses the reaction D-glyceraldehyde 3-phosphate + pyruvate + H(+) = 1-deoxy-D-xylulose 5-phosphate + CO2. The protein operates within metabolic intermediate biosynthesis; 1-deoxy-D-xylulose 5-phosphate biosynthesis; 1-deoxy-D-xylulose 5-phosphate from D-glyceraldehyde 3-phosphate and pyruvate: step 1/1. In terms of biological role, catalyzes the acyloin condensation reaction between C atoms 2 and 3 of pyruvate and glyceraldehyde 3-phosphate to yield 1-deoxy-D-xylulose-5-phosphate (DXP). This Escherichia coli O139:H28 (strain E24377A / ETEC) protein is 1-deoxy-D-xylulose-5-phosphate synthase.